The following is a 181-amino-acid chain: Crossover junction endodeoxyribonuclease RuvC (181 aa).

Active-site residues include D7, E67, and D139. Residues D7, E67, and D139 each contribute to the Mg(2+) site.

The protein belongs to the RuvC family. In terms of assembly, homodimer which binds Holliday junction (HJ) DNA. The HJ becomes 2-fold symmetrical on binding to RuvC with unstacked arms; it has a different conformation from HJ DNA in complex with RuvA. In the full resolvosome a probable DNA-RuvA(4)-RuvB(12)-RuvC(2) complex forms which resolves the HJ. Mg(2+) serves as cofactor.

Its subcellular location is the cytoplasm. The catalysed reaction is Endonucleolytic cleavage at a junction such as a reciprocal single-stranded crossover between two homologous DNA duplexes (Holliday junction).. In terms of biological role, the RuvA-RuvB-RuvC complex processes Holliday junction (HJ) DNA during genetic recombination and DNA repair. Endonuclease that resolves HJ intermediates. Cleaves cruciform DNA by making single-stranded nicks across the HJ at symmetrical positions within the homologous arms, yielding a 5'-phosphate and a 3'-hydroxyl group; requires a central core of homology in the junction. The consensus cleavage sequence is 5'-(A/T)TT(C/G)-3'. Cleavage occurs on the 3'-side of the TT dinucleotide at the point of strand exchange. HJ branch migration catalyzed by RuvA-RuvB allows RuvC to scan DNA until it finds its consensus sequence, where it cleaves and resolves the cruciform DNA. This is Crossover junction endodeoxyribonuclease RuvC from Cupriavidus pinatubonensis (strain JMP 134 / LMG 1197) (Cupriavidus necator (strain JMP 134)).